The chain runs to 632 residues: tRNA uridine 5-carboxymethylaminomethyl modification enzyme MnmG (632 aa).

Residues G13–G18, V125, and S180 each bind FAD. Residue G273–F287 coordinates NAD(+). Q370 is a binding site for FAD.

It belongs to the MnmG family. In terms of assembly, homodimer. Heterotetramer of two MnmE and two MnmG subunits. The cofactor is FAD.

It is found in the cytoplasm. Its function is as follows. NAD-binding protein involved in the addition of a carboxymethylaminomethyl (cmnm) group at the wobble position (U34) of certain tRNAs, forming tRNA-cmnm(5)s(2)U34. The polypeptide is tRNA uridine 5-carboxymethylaminomethyl modification enzyme MnmG (Nitrosospira multiformis (strain ATCC 25196 / NCIMB 11849 / C 71)).